A 238-amino-acid chain; its full sequence is Large ribosomal subunit protein uL1 (238 aa).

This sequence belongs to the universal ribosomal protein uL1 family. In terms of assembly, part of the 50S ribosomal subunit.

Functionally, binds directly to 23S rRNA. The L1 stalk is quite mobile in the ribosome, and is involved in E site tRNA release. Its function is as follows. Protein L1 is also a translational repressor protein, it controls the translation of the L11 operon by binding to its mRNA. This is Large ribosomal subunit protein uL1 from Trichormus variabilis (strain ATCC 29413 / PCC 7937) (Anabaena variabilis).